A 262-amino-acid chain; its full sequence is MALGLKCFRMVHPTFRNYLAASIRPVSEVTLKTVHERQHGHRQYMAYSAVPVRHFATKKAKAKGKGQSQTRVNINAALVEDIINLEEVNEEMKSVIEALKDNFNKTLNIRTSPGSLDKIAVVTADGKLALNQISQISMKSPQLILVNMASFPECTAAAIKAIRESGMNLNPEVEGTLIRVPIPQVTREHREMLVKLAKQNTNKAKDSLRKVRTNSMNKLKKSKDTVSEDTIRLIEKQISQMADDTVAELDRHLAVKTKELLG.

The N-terminal 55 residues, 1-55 (MALGLKCFRMVHPTFRNYLAASIRPVSEVTLKTVHERQHGHRQYMAYSAVPVRHF), are a transit peptide targeting the mitochondrion.

This sequence belongs to the RRF family.

Its subcellular location is the mitochondrion. Its function is as follows. Responsible for the disassembly of ribosomes from messenger RNA at the termination of mitochondrial protein biosynthesis. Acts in collaboration with GFM2. Promotes mitochondrial ribosome recycling by dissolution of intersubunit contacts. The sequence is that of Ribosome-recycling factor, mitochondrial from Homo sapiens (Human).